The sequence spans 264 residues: Cyclin-P1-1 (264 aa).

The disordered stretch occupies residues 1–25; that stretch reads MDAAAAAGGEMSRQKATASAPPPPE.

Belongs to the cyclin family. Cyclin U/P subfamily.

This is Cyclin-P1-1 (CYCP1-1) from Oryza sativa subsp. japonica (Rice).